A 57-amino-acid polypeptide reads, in one-letter code: UPF0391 membrane protein RPB_2510 (57 aa).

2 helical membrane passes run 6–26 (WALI…TGIS) and 35–55 (ILFY…FTIF).

This sequence belongs to the UPF0391 family.

The protein resides in the cell membrane. The chain is UPF0391 membrane protein RPB_2510 from Rhodopseudomonas palustris (strain HaA2).